Consider the following 780-residue polypeptide: Replication origin-binding protein (780 aa).

Residues 39-195 enclose the Helicase ATP-binding domain; it reads SFENVRQPIK…AAFKPDTQIA (157 aa). 52 to 59 serves as a coordination point for ATP; sequence AAMGSGKT.

The protein belongs to the herpesviridae OriBP family.

Its function is as follows. Probably involved in DNA replication. Binds the origin of replication (ori). The sequence is that of Replication origin-binding protein (U73) from Homo sapiens (Human).